Consider the following 46-residue polypeptide: Protein PsbN (46 aa).

The chain crosses the membrane as a helical span at residues 7–27 (ALSVAIGVLAVLFGLTGFGVY).

The protein belongs to the PsbN family.

It is found in the cellular thylakoid membrane. In terms of biological role, may play a role in photosystem I and II biogenesis. This is Protein PsbN from Synechococcus sp. (strain CC9605).